Here is a 588-residue protein sequence, read N- to C-terminus: MATSSAYLSCPATSATGKKHVFPNGSPGFLVFGGTRLSNRLVTRKSVIRADLDSMVSDMSTNAPKGLFPPEPEHYRGPKLKVAIIGAGLAGMSTAVELLDQGHEVDIYESRTFIGGKVGSFVDRRGNHIEMGLHVFFGCYNNLFRLLKKVGAEKNLLVKEHTHTFVNKGGEIGELDFRFPVGAPLHGINAFLSTNQLKIYDKARNAVALALSPVVRALVDPDGALQQIRDLDNVSFSEWFLSKGGTRASIQRMWDPVAYALGFIDCDNMSARCMLTIFALFATKTEASLLRMLKGSPDVYLSGPIKKYIMDKGGRFHLRWGCREVLYETSSDGSMYVSGLAMSKATQKKIVKADAYVAACDVPGIKRLVPQKWRELEFFDNIYKLVGVPVVTVQLRYNGWVTELQDLERSRQLKRAAGLDNLLYTPDADFSCFADLALASPDDYYIEGQGSLLQCVLTPGDPYMPLSNDEIIKRVTKQVLALFPSSQGLEVTWSSVLKIGQSLYREGPGKDPFRPDQKTPVENFFLAGSYTKQDYIDSMEGATLSGRQASAYICNVGEQLMALRKKITAAELNDISKGVSLSDELSLV.

The protein belongs to the zeta carotene desaturase family. NAD(+) is required as a cofactor. It depends on NADP(+) as a cofactor. FAD serves as cofactor.

The protein localises to the plastid. Its subcellular location is the chloroplast. It is found in the chromoplast. The catalysed reaction is 9,9'-di-cis-zeta-carotene + 2 a quinone = 7,7',9,9'-tetra-cis-lycopene + 2 a quinol. It functions in the pathway carotenoid biosynthesis; lycopene biosynthesis. In terms of biological role, catalyzes the conversion of zeta-carotene to lycopene via the intermediary of neurosporene. It carries out two consecutive desaturations (introduction of double bonds) at positions C-7 and C-7'. The chain is Zeta-carotene desaturase, chloroplastic/chromoplastic (ZDS) from Solanum lycopersicum (Tomato).